Reading from the N-terminus, the 94-residue chain is DNA-directed RNA polymerase subunit omega (94 aa).

It belongs to the RNA polymerase subunit omega family. In terms of assembly, the RNAP catalytic core consists of 2 alpha, 1 beta, 1 beta' and 1 omega subunit. When a sigma factor is associated with the core the holoenzyme is formed, which can initiate transcription.

It catalyses the reaction RNA(n) + a ribonucleoside 5'-triphosphate = RNA(n+1) + diphosphate. Its function is as follows. Promotes RNA polymerase assembly. Latches the N- and C-terminal regions of the beta' subunit thereby facilitating its interaction with the beta and alpha subunits. The chain is DNA-directed RNA polymerase subunit omega from Bifidobacterium animalis subsp. lactis (strain AD011).